We begin with the raw amino-acid sequence, 457 residues long: NADH-ubiquinone oxidoreductase chain 4 (457 aa).

The next 12 helical transmembrane spans lie at N22–I42, S59–S79, I95–I115, L116–G136, F148–F168, L191–F211, P223–M243, S257–I277, L282–F302, I309–L329, L350–P370, and L433–I453.

This sequence belongs to the complex I subunit 4 family.

The protein resides in the mitochondrion membrane. It catalyses the reaction a ubiquinone + NADH + 5 H(+)(in) = a ubiquinol + NAD(+) + 4 H(+)(out). In terms of biological role, core subunit of the mitochondrial membrane respiratory chain NADH dehydrogenase (Complex I) that is believed to belong to the minimal assembly required for catalysis. Complex I functions in the transfer of electrons from NADH to the respiratory chain. The immediate electron acceptor for the enzyme is believed to be ubiquinone. The chain is NADH-ubiquinone oxidoreductase chain 4 (ND4) from Arbacia lixula (Black urchin).